A 309-amino-acid polypeptide reads, in one-letter code: Probable porphobilinogen deaminase (309 aa).

S-(dipyrrolylmethanemethyl)cysteine is present on Cys-233.

This sequence belongs to the HMBS family. It depends on dipyrromethane as a cofactor.

The catalysed reaction is 4 porphobilinogen + H2O = hydroxymethylbilane + 4 NH4(+). It functions in the pathway porphyrin-containing compound metabolism; protoporphyrin-IX biosynthesis; coproporphyrinogen-III from 5-aminolevulinate: step 2/4. In terms of biological role, tetrapolymerization of the monopyrrole PBG into the hydroxymethylbilane pre-uroporphyrinogen in several discrete steps. This is Probable porphobilinogen deaminase from Methanococcoides burtonii (strain DSM 6242 / NBRC 107633 / OCM 468 / ACE-M).